Reading from the N-terminus, the 515-residue chain is Vacuolar fusion protein CCZ1 homolog A (515 aa).

This sequence belongs to the CCZ1 family. As to quaternary structure, interacts with MON1.

The protein localises to the endosome. It is found in the prevacuolar compartment. Functionally, plays an important role in membrane trafficking through the secretory apparatus. In complex with MON1, acts as a guanine exchange factor (GEF) for RABG3F of the Rab7 protein family. Promotes the exchange of GDP to GTP, converting RABG3F from an inactive GDP-bound form into an active GTP-bound form. The RABG3F active form is involved in protein trafficking from prevacuolar compartments (PVCs) to vacuoles. May serve as a linker between Rab5 and Rab7 protein families in PVCs and mediate PVC maturation. This Arabidopsis thaliana (Mouse-ear cress) protein is Vacuolar fusion protein CCZ1 homolog A.